The primary structure comprises 241 residues: Ribonuclease PH (241 aa).

Phosphate contacts are provided by residues Arg-89 and 127-129 (GTR).

This sequence belongs to the RNase PH family. As to quaternary structure, homohexameric ring arranged as a trimer of dimers.

It catalyses the reaction tRNA(n+1) + phosphate = tRNA(n) + a ribonucleoside 5'-diphosphate. Its function is as follows. Phosphorolytic 3'-5' exoribonuclease that plays an important role in tRNA 3'-end maturation. Removes nucleotide residues following the 3'-CCA terminus of tRNAs; can also add nucleotides to the ends of RNA molecules by using nucleoside diphosphates as substrates, but this may not be physiologically important. Probably plays a role in initiation of 16S rRNA degradation (leading to ribosome degradation) during starvation. This chain is Ribonuclease PH, found in Xanthomonas euvesicatoria pv. vesicatoria (strain 85-10) (Xanthomonas campestris pv. vesicatoria).